The sequence spans 357 residues: AA9 family lytic polysaccharide monooxygenase B (357 aa).

Residues 1–18 (MKFSSVLALAASAKLVAS) form the signal peptide. His-19 and His-101 together coordinate Cu(2+). The catalytic stretch occupies residues 19–234 (HATVFAVWIN…IPGPAVWDGA (216 aa)). Cysteines 61 and 182 form a disulfide. The O2 site is built by His-168 and Gln-177. Tyr-179 contributes to the Cu(2+) binding site. Residues 235–318 (SSGSGSSGSG…SAAPTGGTGT (84 aa)) are ser/Thr-rich linker. Residues 292–317 (SVRPTTSAAPTTSAPTSSAAPTGGTG) form a disordered region. Residues 295 to 313 (PTTSAAPTTSAPTSSAAPT) show a composition bias toward low complexity. Positions 319–355 (GSIQIYQQCGGMNYKGATGCASGLTCKQWNPYYHQCV) constitute a CBM1 domain.

It belongs to the polysaccharide monooxygenase AA9 family. The cofactor is Cu(2+).

It localises to the secreted. The catalysed reaction is [(1-&gt;4)-beta-D-glucosyl]n+m + reduced acceptor + O2 = 4-dehydro-beta-D-glucosyl-[(1-&gt;4)-beta-D-glucosyl]n-1 + [(1-&gt;4)-beta-D-glucosyl]m + acceptor + H2O.. Functionally, lytic polysaccharide monooxygenase (LPMO) that depolymerizes crystalline and amorphous polysaccharides via the oxidation of scissile alpha- or beta-(1-4)-glycosidic bonds, yielding C4 oxidation products. Catalysis by LPMOs requires the reduction of the active-site copper from Cu(II) to Cu(I) by a reducing agent and H(2)O(2) or O(2) as a cosubstrate. Active on carboxymethylcellulose (CMC), hydroxyethylcellulose (HEC) and beta-glucan. Also active on soluble cellohexaose, a property that is restricted to only a few characterized LPMOs. The polypeptide is AA9 family lytic polysaccharide monooxygenase B (Emericella nidulans (strain FGSC A4 / ATCC 38163 / CBS 112.46 / NRRL 194 / M139) (Aspergillus nidulans)).